Here is a 279-residue protein sequence, read N- to C-terminus: Putative pyruvate, phosphate dikinase regulatory protein (279 aa).

153-160 (GISRTSKT) contributes to the ADP binding site.

It belongs to the pyruvate, phosphate/water dikinase regulatory protein family. PDRP subfamily.

The catalysed reaction is N(tele)-phospho-L-histidyl/L-threonyl-[pyruvate, phosphate dikinase] + ADP = N(tele)-phospho-L-histidyl/O-phospho-L-threonyl-[pyruvate, phosphate dikinase] + AMP + H(+). The enzyme catalyses N(tele)-phospho-L-histidyl/O-phospho-L-threonyl-[pyruvate, phosphate dikinase] + phosphate + H(+) = N(tele)-phospho-L-histidyl/L-threonyl-[pyruvate, phosphate dikinase] + diphosphate. Its function is as follows. Bifunctional serine/threonine kinase and phosphorylase involved in the regulation of the pyruvate, phosphate dikinase (PPDK) by catalyzing its phosphorylation/dephosphorylation. This chain is Putative pyruvate, phosphate dikinase regulatory protein, found in Bartonella bacilliformis (strain ATCC 35685 / KC583 / Herrer 020/F12,63).